The chain runs to 1296 residues: DNA-directed RNA polymerase subunit beta' (1296 aa).

Residues C60, C62, C75, and C78 each contribute to the Zn(2+) site. Residues 188–209 are disordered; sequence GAKGDARRKVRESAEREMRQIR. The Mg(2+) site is built by D535, D537, and D539. Zn(2+) is bound by residues C877, C954, C961, and C964.

Belongs to the RNA polymerase beta' chain family. The RNAP catalytic core consists of 2 alpha, 1 beta, 1 beta' and 1 omega subunit. When a sigma factor is associated with the core the holoenzyme is formed, which can initiate transcription. Mg(2+) is required as a cofactor. Requires Zn(2+) as cofactor.

The catalysed reaction is RNA(n) + a ribonucleoside 5'-triphosphate = RNA(n+1) + diphosphate. Functionally, DNA-dependent RNA polymerase catalyzes the transcription of DNA into RNA using the four ribonucleoside triphosphates as substrates. The chain is DNA-directed RNA polymerase subunit beta' from Parafrankia sp. (strain EAN1pec).